A 243-amino-acid chain; its full sequence is Probable transcriptional regulatory protein LJ_0904 (243 aa).

Residues 1–22 (MSGHSKWHNIQGRKNAQDAKRG) are disordered.

It belongs to the TACO1 family.

The protein resides in the cytoplasm. This Lactobacillus johnsonii (strain CNCM I-12250 / La1 / NCC 533) protein is Probable transcriptional regulatory protein LJ_0904.